An 83-amino-acid chain; its full sequence is MAHKKGQGSTRNGRDSHSKRLGIKVGSGEVVRAGSILVRQRGTKWHPAKNVGRGTDDTLFALADGVVAFRKSNKTYISIETGA.

Residues 1–22 (MAHKKGQGSTRNGRDSHSKRLG) form a disordered region.

This sequence belongs to the bacterial ribosomal protein bL27 family.

This is Large ribosomal subunit protein bL27 from Protochlamydia amoebophila (strain UWE25).